We begin with the raw amino-acid sequence, 220 residues long: uncharacterized protein (220 aa).

This is an uncharacterized protein from Methanocaldococcus jannaschii (strain ATCC 43067 / DSM 2661 / JAL-1 / JCM 10045 / NBRC 100440) (Methanococcus jannaschii).